Consider the following 375-residue polypeptide: MKQKVIVGLSGGVDSSVACYLLLEQGYEVEGLFMRNWDSATNNDILGNRNINDDICPQEQDYLDAKAVADKLNIKLYRVDFIKEYWDYVFSYFIEEYKKARTPNPDILCNKYIKFDKFLNYAINQLNADYIAMGHYAKVEFNKTTNQYELIKASDTNKDQTYFLSQLNQKQLSKTLFPLANLTKEQVRKIALKQNLITANKKDSTGICFIGERSFTNFLQNYIPNQTGDIVDIKTNKVLGQHIGVMYYTIGQRKGINLSGMSEPYYVADKDVKKNILYVCSTSDQSYLHSTSCLVNDINWILDISKYVDDINQFECQAKFRYRQIDNKVVVKKIDDNNYQVIFKKPLKAITIGQQAVFYLNDICLGGAVIDKVIK.

ATP-binding positions include 8–15 and methionine 34; that span reads GLSGGVDS. The segment at 104–106 is interaction with target base in tRNA; the sequence is NPD. Cysteine 109 functions as the Nucleophile in the catalytic mechanism. The cysteines at positions 109 and 208 are disulfide-linked. Glycine 134 lines the ATP pocket. Residues 158–160 are interaction with tRNA; that stretch reads KDQ. Cysteine 208 acts as the Cysteine persulfide intermediate in catalysis. An interaction with tRNA region spans residues 321 to 322; the sequence is RY.

Belongs to the MnmA/TRMU family.

The protein resides in the cytoplasm. The catalysed reaction is S-sulfanyl-L-cysteinyl-[protein] + uridine(34) in tRNA + AH2 + ATP = 2-thiouridine(34) in tRNA + L-cysteinyl-[protein] + A + AMP + diphosphate + H(+). In terms of biological role, catalyzes the 2-thiolation of uridine at the wobble position (U34) of tRNA, leading to the formation of s(2)U34. This Mycoplasma mycoides subsp. mycoides SC (strain CCUG 32753 / NCTC 10114 / PG1) protein is tRNA-specific 2-thiouridylase MnmA.